The chain runs to 336 residues: Glyceraldehyde-3-phosphate dehydrogenase (336 aa).

Residues 12–13 (RI), aspartate 34, arginine 78, and threonine 121 each bind NAD(+). D-glyceraldehyde 3-phosphate is bound by residues 151–153 (SCT), threonine 182, arginine 199, 212–213 (TG), and arginine 235. The Nucleophile role is filled by cysteine 152. Asparagine 316 contributes to the NAD(+) binding site.

Belongs to the glyceraldehyde-3-phosphate dehydrogenase family. Homotetramer.

The protein resides in the cytoplasm. It carries out the reaction D-glyceraldehyde 3-phosphate + phosphate + NAD(+) = (2R)-3-phospho-glyceroyl phosphate + NADH + H(+). The protein operates within carbohydrate degradation; glycolysis; pyruvate from D-glyceraldehyde 3-phosphate: step 1/5. Catalyzes the oxidative phosphorylation of glyceraldehyde 3-phosphate (G3P) to 1,3-bisphosphoglycerate (BPG) using the cofactor NAD. The first reaction step involves the formation of a hemiacetal intermediate between G3P and a cysteine residue, and this hemiacetal intermediate is then oxidized to a thioester, with concomitant reduction of NAD to NADH. The reduced NADH is then exchanged with the second NAD, and the thioester is attacked by a nucleophilic inorganic phosphate to produce BPG. The sequence is that of Glyceraldehyde-3-phosphate dehydrogenase (gap) from Streptococcus pyogenes serotype M1.